Consider the following 480-residue polypeptide: Phenylalanine--tRNA ligase alpha subunit (480 aa).

Positions 324 and 407 each coordinate L-phenylalanine. Glu409 contributes to the Mg(2+) binding site. Phe432 serves as a coordination point for L-phenylalanine.

This sequence belongs to the class-II aminoacyl-tRNA synthetase family. Phe-tRNA synthetase alpha subunit type 2 subfamily. As to quaternary structure, tetramer of two alpha and two beta subunits. Mg(2+) is required as a cofactor.

The protein resides in the cytoplasm. It catalyses the reaction tRNA(Phe) + L-phenylalanine + ATP = L-phenylalanyl-tRNA(Phe) + AMP + diphosphate + H(+). The sequence is that of Phenylalanine--tRNA ligase alpha subunit from Methanocaldococcus jannaschii (strain ATCC 43067 / DSM 2661 / JAL-1 / JCM 10045 / NBRC 100440) (Methanococcus jannaschii).